Here is a 181-residue protein sequence, read N- to C-terminus: Adenylyl-sulfate kinase (181 aa).

Glycine 20–serine 27 is an ATP binding site. Serine 94 acts as the Phosphoserine intermediate in catalysis.

The protein belongs to the APS kinase family.

The enzyme catalyses adenosine 5'-phosphosulfate + ATP = 3'-phosphoadenylyl sulfate + ADP + H(+). It functions in the pathway sulfur metabolism; hydrogen sulfide biosynthesis; sulfite from sulfate: step 2/3. Its function is as follows. Catalyzes the synthesis of activated sulfate. This Deinococcus deserti (strain DSM 17065 / CIP 109153 / LMG 22923 / VCD115) protein is Adenylyl-sulfate kinase.